A 215-amino-acid chain; its full sequence is N-(5'-phosphoribosyl)anthranilate isomerase (215 aa).

The protein belongs to the TrpF family.

It catalyses the reaction N-(5-phospho-beta-D-ribosyl)anthranilate = 1-(2-carboxyphenylamino)-1-deoxy-D-ribulose 5-phosphate. The protein operates within amino-acid biosynthesis; L-tryptophan biosynthesis; L-tryptophan from chorismate: step 3/5. The chain is N-(5'-phosphoribosyl)anthranilate isomerase from Chlorobium phaeobacteroides (strain DSM 266 / SMG 266 / 2430).